We begin with the raw amino-acid sequence, 425 residues long: MTRLDSVERAVADIAAGKAVIVIDDEDRENEGDLIFAAEKATPEMVAFMVRYTSGYLCVPLDGAICDRLGLLPMYAVNQDKHGTAYTVTVDARNGVGTGISASDRATTMRLLADPTSIAEDFTRPGHVVPLRAKDGGVLRRPGHTEAAVDLARMAGLQPAGAICEIVSQKDEGSMAQTDELRVFADEHDLAMITIADLIEWRRKHEKHIERIAEARIPTRHGEFRAIGYTSIYEEVEHVALVRGEIAGPNSDGDDVLVRVHSECLTGDVFGSRRCDCGPQLDAAMAMVAREGRGIVLYMRGHEGRGIGLMHKLQAYQLQDAGEDTVDANLKLGLPADARDYGIGAQILVDLGVRSMRLLTNNPAKRVGLDGYGLHIIERVPLPVRTNAENIRYLMTKRDKMGHDLAGLDDFHESVHLPGEFGGAL.

The interval 1–204 (MTRLDSVERA…IADLIEWRRK (204 aa)) is DHBP synthase. D-ribulose 5-phosphate contacts are provided by residues 28–29 (RE), Asp-33, 141–145 (RPGHT), and Glu-165. Glu-29 lines the Mg(2+) pocket. His-144 provides a ligand contact to Mg(2+). Residues 205-425 (HEKHIERIAE…HLPGEFGGAL (221 aa)) form a GTP cyclohydrolase II region. 259 to 263 (RVHSE) is a binding site for GTP. 3 residues coordinate Zn(2+): Cys-264, Cys-275, and Cys-277. GTP contacts are provided by residues Gln-280, 303-305 (EGR), and Thr-325. The active-site Proton acceptor; for GTP cyclohydrolase activity is Asp-337. The active-site Nucleophile; for GTP cyclohydrolase activity is the Arg-339. Positions 360 and 365 each coordinate GTP.

This sequence in the N-terminal section; belongs to the DHBP synthase family. It in the C-terminal section; belongs to the GTP cyclohydrolase II family. It depends on Mg(2+) as a cofactor. Mn(2+) serves as cofactor. Zn(2+) is required as a cofactor.

It catalyses the reaction D-ribulose 5-phosphate = (2S)-2-hydroxy-3-oxobutyl phosphate + formate + H(+). It carries out the reaction GTP + 4 H2O = 2,5-diamino-6-hydroxy-4-(5-phosphoribosylamino)-pyrimidine + formate + 2 phosphate + 3 H(+). It functions in the pathway cofactor biosynthesis; riboflavin biosynthesis; 2-hydroxy-3-oxobutyl phosphate from D-ribulose 5-phosphate: step 1/1. It participates in cofactor biosynthesis; riboflavin biosynthesis; 5-amino-6-(D-ribitylamino)uracil from GTP: step 1/4. Catalyzes the conversion of D-ribulose 5-phosphate to formate and 3,4-dihydroxy-2-butanone 4-phosphate. Its function is as follows. Catalyzes the conversion of GTP to 2,5-diamino-6-ribosylamino-4(3H)-pyrimidinone 5'-phosphate (DARP), formate and pyrophosphate. In Mycolicibacterium paratuberculosis (strain ATCC BAA-968 / K-10) (Mycobacterium paratuberculosis), this protein is Riboflavin biosynthesis protein RibBA.